Here is a 131-residue protein sequence, read N- to C-terminus: MGDYVVVLEAPIIVKDVETSEDAINVAVSKVTKALNKEKLDFVRVEIGYSQCPVCGAHFESAFVIGSVGLVGMYLTLKVYNAQSIEHAERIAKAVVGKALKKVPLKVFEIRELEHDGENGIEAEELNGEDV.

Belongs to the UPF0212 family.

The sequence is that of UPF0212 protein TK1194 from Thermococcus kodakarensis (strain ATCC BAA-918 / JCM 12380 / KOD1) (Pyrococcus kodakaraensis (strain KOD1)).